The primary structure comprises 325 residues: MALRSPARDYLVSMIGELVGTFLFLFFAFAAAQTANQPNGTKPLTPNATDTSKLLYIALAFGASLAANVWVFFRVSGGQFNPAVTLALVLIRAVSPTKALILIPAQLVGGSLAAAAVKGIIPGDDILFAVSLGPGVANVQGLFIELLLTFMLVFTILMLVAEKTKSTFVAPIGIGFSLFIGHLVGIFWTGAGINPARAFSPALIQASFPSYHWIYWLGPALGSFLAAGLYLGLKEMKYELVGGDADKEKREEGLTVQQADLIIETLRGLPRAIQGSGALGQFEGTTEGHRSPVDLERGAEVRILEDDPHIRKSRYGSPDSTDLPT.

The Cytoplasmic segment spans residues 1–10 (MALRSPARDY). Residues 11–31 (LVSMIGELVGTFLFLFFAFAA) form a helical membrane-spanning segment. Residues 32–52 (AQTANQPNGTKPLTPNATDTS) are Extracellular-facing. Asparagine 39 and asparagine 47 each carry an N-linked (GlcNAc...) asparagine glycan. Residues 53–73 (KLLYIALAFGASLAANVWVFF) traverse the membrane as a helical segment. The Cytoplasmic portion of the chain corresponds to 74–100 (RVSGGQFNPAVTLALVLIRAVSPTKAL). Positions 81-83 (NPA) match the NPA 1 motif. The helical transmembrane segment at 101–121 (ILIPAQLVGGSLAAAAVKGII) threads the bilayer. The Extracellular segment spans residues 122–140 (PGDDILFAVSLGPGVANVQ). A helical membrane pass occupies residues 141 to 161 (GLFIELLLTFMLVFTILMLVA). Over 162–167 (EKTKST) the chain is Cytoplasmic. Residues 168-188 (FVAPIGIGFSLFIGHLVGIFW) traverse the membrane as a helical segment. Residues 189-212 (TGAGINPARAFSPALIQASFPSYH) lie on the Extracellular side of the membrane. An NPA 2 motif is present at residues 194 to 196 (NPA). Residues 213 to 233 (WIYWLGPALGSFLAAGLYLGL) form a helical membrane-spanning segment. Residues 234–325 (KEMKYELVGG…GSPDSTDLPT (92 aa)) are Cytoplasmic-facing. Disordered stretches follow at residues 279 to 298 (LGQFEGTTEGHRSPVDLERG) and 305 to 325 (EDDPHIRKSRYGSPDSTDLPT). A compositionally biased stretch (basic and acidic residues) spans 286-298 (TEGHRSPVDLERG).

It belongs to the MIP/aquaporin (TC 1.A.8) family.

The protein resides in the cell membrane. The catalysed reaction is H2O2(out) = H2O2(in). It catalyses the reaction H2O(in) = H2O(out). In terms of biological role, plasma membrane water channel that regulates the reactive oxygen species (ROS)-signaling pathway through its capacity to act as a membrane channel for hydrogen peroxide uptake. Required for the formation of infection structures and infection, especially on host leaves where it is essential for the penetration into the host. Regulates the expression of proteins related to redox-regulation and intracellular signal transduction and plays a role in the distribution of mitochondria in the hyphae. This chain is Aquaporin-8, found in Botryotinia fuckeliana (strain B05.10) (Noble rot fungus).